The following is a 130-amino-acid chain: Con-Ins G2 (130 aa).

A signal peptide spans 1 to 24 (MTTSSYFLLVALGLLLYVRQSFST). Intrachain disulfides connect Cys29–Cys100, Cys41–Cys103, Cys53–Cys116, and Cys102–Cys107. Pro34 bears the 4-hydroxyproline; partial mark. The interval 54–74 (EEEEARRGGTNDGGKKRRRAS) is disordered. Residues 59–92 (RRGGTNDGGKKRRRASPLWKRRRFLSMLKARAKR) constitute a propeptide, c peptide. Glu111 is modified (4-carboxyglutamate; partial).

This sequence belongs to the insulin family. As to quaternary structure, heterodimer of A and B chains; disulfide-linked. Expressed by the venom gland.

The protein resides in the secreted. Its function is as follows. This venom insulin, from a fish-hunting cone snail, facilitates prey capture by rapidly inducing hypoglycemic shock. Intraperitoneal injection of this peptide into zebrafish lowers blood glucose with the same potency than human insulin. In vivo, when applied to water, this peptide reduces overall locomotor activity of zebrafish larvae, observed as a significant decrease in the percentage of time spent swimming and movement frequency. This Conus geographus (Geography cone) protein is Con-Ins G2.